We begin with the raw amino-acid sequence, 466 residues long: MNNSTYINSSSENVIALESPYKTIEVVFIVLVAGSLSLVTIIGNILVMVSIKVNRHLQTVNNYFLFSLACADLIIGIFSMNLYTLYTVIGYWPLGPVVCDLWLALDYVVSNASVMNLLIISFDRYFCVTKPLTYPVKRTTKMAGMMIAAAWVLSFILWAPAILFWQFIVGGRTVPDKDCYIQFFSNPAVTFGTAIAAFYLPVIIMTVLYWQISRASKSRIKKGKKEAAQNQDPVSPSLVQGKIVKPNNNNIPTSSDGLEHNKVQNGKTTGESVMENCVQGEEKDSSNDSTSVSVVPSNTKEDEAAKDASQISASQDHLKVENSKLTCIRIVTKSQKGDCCAPTNTTVEIVGTNGDEKQNSVARKIVKMTKQPAKKKPPPSREKKVTRTILAILLAFIITWTPYNVMVLINSFCASCIPGTVWTIGYWLCYINSTINPACYALCNATFKKTFKHLLMCHYKNIGATR.

Topologically, residues 1-25 are extracellular; it reads MNNSTYINSSSENVIALESPYKTIE. Asn2, Asn3, and Asn8 each carry an N-linked (GlcNAc...) asparagine glycan. Residues 26 to 48 traverse the membrane as a helical segment; that stretch reads VVFIVLVAGSLSLVTIIGNILVM. Topologically, residues 49 to 62 are cytoplasmic; the sequence is VSIKVNRHLQTVNN. The chain crosses the membrane as a helical span at residues 63–83; the sequence is YFLFSLACADLIIGIFSMNLY. At 84-100 the chain is on the extracellular side; the sequence is TLYTVIGYWPLGPVVCD. A disulfide bridge connects residues Cys99 and Cys179. The helical transmembrane segment at 101–122 threads the bilayer; that stretch reads LWLALDYVVSNASVMNLLIISF. The Important for signaling motif lies at 123 to 125; sequence DRY. The Cytoplasmic segment spans residues 123 to 142; that stretch reads DRYFCVTKPLTYPVKRTTKM. Residues 143 to 165 form a helical membrane-spanning segment; that stretch reads AGMMIAAAWVLSFILWAPAILFW. Residues 166 to 187 are Extracellular-facing; the sequence is QFIVGGRTVPDKDCYIQFFSNP. Residues 188–212 traverse the membrane as a helical segment; that stretch reads AVTFGTAIAAFYLPVIIMTVLYWQI. Over 213–387 the chain is Cytoplasmic; that stretch reads SRASKSRIKK…PPSREKKVTR (175 aa). Disordered stretches follow at residues 223–265 and 279–315; these read GKKE…KVQN and QGEE…SASQ. Composition is skewed to polar residues over residues 228–238 and 246–256; these read AQNQDPVSPSL and PNNNNIPTSSD. A compositionally biased stretch (low complexity) spans 287–298; it reads NDSTSVSVVPSN. The chain crosses the membrane as a helical span at residues 388-410; the sequence is TILAILLAFIITWTPYNVMVLIN. Topologically, residues 411 to 418 are extracellular; sequence SFCASCIP. Cys413 and Cys416 are oxidised to a cystine. Residues 419–442 form a helical membrane-spanning segment; sequence GTVWTIGYWLCYINSTINPACYAL. The Important for signaling signature appears at 436 to 440; it reads NPACY. At 443 to 466 the chain is on the cytoplasmic side; it reads CNATFKKTFKHLLMCHYKNIGATR. Phosphothreonine is present on residues Thr446, Thr450, and Thr465.

It belongs to the G-protein coupled receptor 1 family. Muscarinic acetylcholine receptor subfamily. CHRM2 sub-subfamily.

It is found in the cell membrane. It localises to the postsynaptic cell membrane. Its function is as follows. The muscarinic acetylcholine receptor mediates various cellular responses, including inhibition of adenylate cyclase, breakdown of phosphoinositides and modulation of potassium channels through the action of G proteins. Primary transducing effect is adenylate cyclase inhibition. Signaling promotes phospholipase C activity, leading to the release of inositol trisphosphate (IP3); this then triggers calcium ion release into the cytosol. This Gallus gallus (Chicken) protein is Muscarinic acetylcholine receptor M2 (CHRM2).